The chain runs to 559 residues: Formate--tetrahydrofolate ligase (559 aa).

68–75 (TPAGEGKT) provides a ligand contact to ATP.

The protein belongs to the formate--tetrahydrofolate ligase family.

The catalysed reaction is (6S)-5,6,7,8-tetrahydrofolate + formate + ATP = (6R)-10-formyltetrahydrofolate + ADP + phosphate. It functions in the pathway one-carbon metabolism; tetrahydrofolate interconversion. The polypeptide is Formate--tetrahydrofolate ligase (Moorella thermoacetica (strain ATCC 39073 / JCM 9320)).